A 137-amino-acid chain; its full sequence is Small ribosomal subunit protein uS12 (137 aa).

Residues 1–20 form a disordered region; the sequence is MPTTNQLVNRGRTSKVQKQN. Asp102 carries the 3-methylthioaspartic acid modification.

Belongs to the universal ribosomal protein uS12 family. In terms of assembly, part of the 30S ribosomal subunit. Contacts proteins S8 and S17. May interact with IF1 in the 30S initiation complex.

With S4 and S5 plays an important role in translational accuracy. In terms of biological role, interacts with and stabilizes bases of the 16S rRNA that are involved in tRNA selection in the A site and with the mRNA backbone. Located at the interface of the 30S and 50S subunits, it traverses the body of the 30S subunit contacting proteins on the other side and probably holding the rRNA structure together. The combined cluster of proteins S8, S12 and S17 appears to hold together the shoulder and platform of the 30S subunit. This chain is Small ribosomal subunit protein uS12, found in Mycoplasmopsis synoviae (strain 53) (Mycoplasma synoviae).